The chain runs to 398 residues: Cyclin-dependent kinase D-1 (398 aa).

The Protein kinase domain maps to 11–291; that stretch reads YLKREVLGQG…IQQALKHRYF (281 aa). ATP is bound by residues 17-25 and K40; that span reads LGQGTYGVV. Y22 carries the phosphotyrosine modification. The Proton acceptor role is filled by D133. S160 is subject to Phosphoserine. The residue at position 166 (T166) is a Phosphothreonine. Residues 296-318 form a disordered region; sequence SPTDPLKLPRPVSKQDAKSSDSK. The span at 308 to 318 shows a compositional bias: basic and acidic residues; it reads SKQDAKSSDSK.

It belongs to the protein kinase superfamily. CMGC Ser/Thr protein kinase family. CDC2/CDKX subfamily. In terms of processing, autophosphorylated. In terms of tissue distribution, expressed at low levels in suspension cell culture, but not in plant organs.

The protein resides in the nucleus. It catalyses the reaction L-seryl-[protein] + ATP = O-phospho-L-seryl-[protein] + ADP + H(+). The enzyme catalyses L-threonyl-[protein] + ATP = O-phospho-L-threonyl-[protein] + ADP + H(+). It carries out the reaction [DNA-directed RNA polymerase] + ATP = phospho-[DNA-directed RNA polymerase] + ADP + H(+). The chain is Cyclin-dependent kinase D-1 (CDKD-1) from Arabidopsis thaliana (Mouse-ear cress).